Consider the following 155-residue polypeptide: Deoxyuridine 5'-triphosphate nucleotidohydrolase (155 aa).

Substrate-binding positions include 74-76 (RSG), asparagine 87, and 91-93 (LID).

This sequence belongs to the dUTPase family. Mg(2+) serves as cofactor.

The catalysed reaction is dUTP + H2O = dUMP + diphosphate + H(+). It participates in pyrimidine metabolism; dUMP biosynthesis; dUMP from dCTP (dUTP route): step 2/2. Functionally, this enzyme is involved in nucleotide metabolism: it produces dUMP, the immediate precursor of thymidine nucleotides and it decreases the intracellular concentration of dUTP so that uracil cannot be incorporated into DNA. This Xanthomonas oryzae pv. oryzae (strain PXO99A) protein is Deoxyuridine 5'-triphosphate nucleotidohydrolase.